The chain runs to 207 residues: Ribosome maturation factor RimM (207 aa).

The region spanning 130 to 207 (EDEFYWVDLI…RIVVDWGLDY (78 aa)) is the PRC barrel domain.

This sequence belongs to the RimM family. As to quaternary structure, binds ribosomal protein uS19.

The protein resides in the cytoplasm. Its function is as follows. An accessory protein needed during the final step in the assembly of 30S ribosomal subunit, possibly for assembly of the head region. Essential for efficient processing of 16S rRNA. May be needed both before and after RbfA during the maturation of 16S rRNA. It has affinity for free ribosomal 30S subunits but not for 70S ribosomes. The protein is Ribosome maturation factor RimM of Cupriavidus taiwanensis (strain DSM 17343 / BCRC 17206 / CCUG 44338 / CIP 107171 / LMG 19424 / R1) (Ralstonia taiwanensis (strain LMG 19424)).